Consider the following 541-residue polypeptide: Copper transport protein CutJ (541 aa).

The N-terminal stretch at 1–25 is a signal peptide; that stretch reads MKRNRWWIILLLFLVFLPKTSFAHA. 2 residues coordinate Cu cation: histidine 24 and histidine 110. 8 helical membrane-spanning segments follow: residues 146 to 166, 180 to 200, 228 to 248, 262 to 282, 293 to 313, 335 to 355, 370 to 390, and 407 to 427; these read AILYTALSLFIGTVFFHLFWY, ILTGSIAALGLALLLQLPIQT, SIWIIQAALFVLLALSVIPAI, PLIFFFGLLLAKAFTGHAAVV, FLHLTSASIWVGGIAALVLLL, WALTAVGVILFSGLLNGFFII, LLVKSGLFVFMLVLGAIHFLL, and WAIGIAVLITAAVFTSLPSPP.

This sequence in the N-terminal section; belongs to the CopC family. The protein in the C-terminal section; belongs to the CopD family.

The protein localises to the cell membrane. Its function is as follows. Involved in uptake of extracellular oxidized copper under copper-limiting conditions. This is Copper transport protein CutJ from Bacillus subtilis (strain 168).